An 85-amino-acid polypeptide reads, in one-letter code: Cell division topological specificity factor (85 aa).

Belongs to the MinE family.

Functionally, prevents the cell division inhibition by proteins MinC and MinD at internal division sites while permitting inhibition at polar sites. This ensures cell division at the proper site by restricting the formation of a division septum at the midpoint of the long axis of the cell. The chain is Cell division topological specificity factor from Stutzerimonas stutzeri (strain A1501) (Pseudomonas stutzeri).